Reading from the N-terminus, the 413-residue chain is Putative competence-damage inducible protein (413 aa).

Belongs to the CinA family.

The polypeptide is Putative competence-damage inducible protein (Desulforudis audaxviator (strain MP104C)).